A 176-amino-acid polypeptide reads, in one-letter code: Ribosome maturation factor RimM (176 aa).

Residues 100–173 (EGEFHLLDLV…WLRLTPPPGL (74 aa)) enclose the PRC barrel domain.

The protein belongs to the RimM family. Binds ribosomal protein uS19.

The protein resides in the cytoplasm. In terms of biological role, an accessory protein needed during the final step in the assembly of 30S ribosomal subunit, possibly for assembly of the head region. Essential for efficient processing of 16S rRNA. May be needed both before and after RbfA during the maturation of 16S rRNA. It has affinity for free ribosomal 30S subunits but not for 70S ribosomes. The sequence is that of Ribosome maturation factor RimM from Prochlorococcus marinus (strain MIT 9303).